The chain runs to 169 residues: Lipoprotein signal peptidase (169 aa).

A run of 4 helical transmembrane segments spans residues 10-30, 41-61, 68-88, and 94-114; these read LPWL…KAFF, VVIP…AFSF, WQRW…VVWL, and GETW…GNLY. Active-site residues include Asp124 and Asp143. The chain crosses the membrane as a helical span at residues 135 to 155; sequence YFPAFNLADSAITVGAVMLAL.

It belongs to the peptidase A8 family.

The protein localises to the cell inner membrane. The enzyme catalyses Release of signal peptides from bacterial membrane prolipoproteins. Hydrolyzes -Xaa-Yaa-Zaa-|-(S,diacylglyceryl)Cys-, in which Xaa is hydrophobic (preferably Leu), and Yaa (Ala or Ser) and Zaa (Gly or Ala) have small, neutral side chains.. It participates in protein modification; lipoprotein biosynthesis (signal peptide cleavage). Its function is as follows. This protein specifically catalyzes the removal of signal peptides from prolipoproteins. The polypeptide is Lipoprotein signal peptidase (Pseudomonas paraeruginosa (strain DSM 24068 / PA7) (Pseudomonas aeruginosa (strain PA7))).